A 469-amino-acid polypeptide reads, in one-letter code: 3-isopropylmalate dehydratase large subunit (469 aa).

[4Fe-4S] cluster is bound by residues cysteine 347, cysteine 407, and cysteine 410.

The protein belongs to the aconitase/IPM isomerase family. LeuC type 1 subfamily. Heterodimer of LeuC and LeuD. The cofactor is [4Fe-4S] cluster.

The enzyme catalyses (2R,3S)-3-isopropylmalate = (2S)-2-isopropylmalate. It participates in amino-acid biosynthesis; L-leucine biosynthesis; L-leucine from 3-methyl-2-oxobutanoate: step 2/4. Catalyzes the isomerization between 2-isopropylmalate and 3-isopropylmalate, via the formation of 2-isopropylmaleate. This chain is 3-isopropylmalate dehydratase large subunit, found in Prochlorococcus marinus subsp. pastoris (strain CCMP1986 / NIES-2087 / MED4).